Reading from the N-terminus, the 818-residue chain is Rho GTPase-activating protein 44 (818 aa).

Positions 14 to 249 constitute a BAR domain; the sequence is QTVGRAEKTE…IKAQQEAWVE (236 aa). The Rho-GAP domain maps to 255–445; that stretch reads KPLEEHLTIS…PIIQHADWFF (191 aa). 3 disordered regions span residues 467 to 493, 530 to 772, and 789 to 818; these read ANYS…RPLS, SSAG…SMST, and TLRL…STAL. The segment covering 479–489 has biased composition (basic and acidic residues); it reads PADRRQPEQAR. Residue S493 is modified to Phosphoserine. Residues 563–579 are compositionally biased toward low complexity; the sequence is QPLDSPAAPALSPSGLG. A compositionally biased stretch (polar residues) spans 598-611; it reads GSAQKGSPGSSQGT. Composition is skewed to low complexity over residues 614-641 and 688-708; these read AGTQ…DQSP and SPYG…LSPA. An interaction with BST2 region spans residues 731–818; it reads KPRQRPTLPP…SEEESESTAL (88 aa). The segment covering 746–757 has biased composition (polar residues); it reads VNLSASSPQSTE. The PDZ-binding motif lies at 764-767; the sequence is MSPG. Residues 794 to 809 are compositionally biased toward basic and acidic residues; sequence PLEHMRRHSVTDKRDS. S809 carries the phosphoserine modification. The PDZ-binding motif lies at 815 to 818; that stretch reads STAL.

As to quaternary structure, interacts with BST2 (via cytoplasmic domain). Interacts (probably via PDZ-binding motif) with SHANK3 (via PDZ domain); the interaction takes place in dendritic spines and promotes GRIA1 exocytosis. Highly expressed in brain. Expressed at weak level in other tissues.

Its subcellular location is the cell projection. It localises to the dendritic spine. The protein resides in the recycling endosome. The protein localises to the presynapse. It is found in the dendrite. Its function is as follows. GTPase-activating protein (GAP) that stimulates the GTPase activity of Rho-type GTPases. Thereby, controls Rho-type GTPases cycling between their active GTP-bound and inactive GDP-bound states. Acts as a GAP at least for CDC42 and RAC1. In neurons, is involved in dendritic spine formation and synaptic plasticity in a specific RAC1-GAP activity. Limits the initiation of exploratory dendritic filopodia. Recruited to actin-patches that seed filopodia, binds specifically to plasma membrane sections that are deformed inward by acto-myosin mediated contractile forces. Acts through GAP activity on RAC1 to reduce actin polymerization necessary for filopodia formation. In association with SHANK3, promotes GRIA1 exocytosis from recycling endosomes and spine morphological changes associated to long-term potentiation. This is Rho GTPase-activating protein 44 from Homo sapiens (Human).